A 183-amino-acid polypeptide reads, in one-letter code: SsrA-binding protein (183 aa).

A disordered region spans residues 1–27 (MAKKATLVDHGAAKGKKKAQSKVSKKN). Residues 13-27 (AKGKKKAQSKVSKKN) show a composition bias toward basic residues.

The protein belongs to the SmpB family.

Its subcellular location is the cytoplasm. Required for rescue of stalled ribosomes mediated by trans-translation. Binds to transfer-messenger RNA (tmRNA), required for stable association of tmRNA with ribosomes. tmRNA and SmpB together mimic tRNA shape, replacing the anticodon stem-loop with SmpB. tmRNA is encoded by the ssrA gene; the 2 termini fold to resemble tRNA(Ala) and it encodes a 'tag peptide', a short internal open reading frame. During trans-translation Ala-aminoacylated tmRNA acts like a tRNA, entering the A-site of stalled ribosomes, displacing the stalled mRNA. The ribosome then switches to translate the ORF on the tmRNA; the nascent peptide is terminated with the 'tag peptide' encoded by the tmRNA and targeted for degradation. The ribosome is freed to recommence translation, which seems to be the essential function of trans-translation. This Corynebacterium kroppenstedtii (strain DSM 44385 / JCM 11950 / CIP 105744 / CCUG 35717) protein is SsrA-binding protein.